A 108-amino-acid polypeptide reads, in one-letter code: Phosphoribosyl-ATP pyrophosphatase (108 aa).

Belongs to the PRA-PH family.

The protein localises to the cytoplasm. The enzyme catalyses 1-(5-phospho-beta-D-ribosyl)-ATP + H2O = 1-(5-phospho-beta-D-ribosyl)-5'-AMP + diphosphate + H(+). Its pathway is amino-acid biosynthesis; L-histidine biosynthesis; L-histidine from 5-phospho-alpha-D-ribose 1-diphosphate: step 2/9. This chain is Phosphoribosyl-ATP pyrophosphatase, found in Aromatoleum aromaticum (strain DSM 19018 / LMG 30748 / EbN1) (Azoarcus sp. (strain EbN1)).